Consider the following 300-residue polypeptide: Ribosomal protein L11 methyltransferase (300 aa).

4 residues coordinate S-adenosyl-L-methionine: T152, G173, D195, and N234.

The protein belongs to the methyltransferase superfamily. PrmA family.

It localises to the cytoplasm. The catalysed reaction is L-lysyl-[protein] + 3 S-adenosyl-L-methionine = N(6),N(6),N(6)-trimethyl-L-lysyl-[protein] + 3 S-adenosyl-L-homocysteine + 3 H(+). Functionally, methylates ribosomal protein L11. This is Ribosomal protein L11 methyltransferase from Burkholderia pseudomallei (strain K96243).